A 328-amino-acid chain; its full sequence is HTH-type transcriptional regulator MalR (328 aa).

Residues 2–57 (PVTIKDVAKAAGVSPSTVTRVIQNKSTISDETKKRVRKAMKELNYHPNLNARSLVS) form the HTH lacI-type domain. The H-T-H motif DNA-binding region spans 5–24 (IKDVAKAAGVSPSTVTRVIQ). Residues 173-218 (TEYFIKKGCKRIAFIGGSKKLFVTKDRLTGYEQALKHYKLTTDNNR) are inducer binding. A dimerization region spans residues 282–291 (NLAAYVDINS).

In terms of biological role, transcriptional repressor of the maltosaccharide utilization operons malxCD and malMP. The protein is HTH-type transcriptional regulator MalR (malR) of Streptococcus pneumoniae serotype 4 (strain ATCC BAA-334 / TIGR4).